Here is a 291-residue protein sequence, read N- to C-terminus: Undecaprenyl-diphosphatase (291 aa).

A run of 8 helical transmembrane segments spans residues 1 to 21 (MFII…LTEF), 48 to 68 (SAFT…AWVF), 102 to 122 (LHVL…DDFI), 126 to 146 (LFSV…MIIA), 162 to 182 (INYF…WPGF), 203 to 223 (SDFT…LSLL), 236 to 256 (FYIL…KTFL), and 267 to 287 (FAIY…GFGI).

This sequence belongs to the UppP family.

It is found in the cell membrane. It carries out the reaction di-trans,octa-cis-undecaprenyl diphosphate + H2O = di-trans,octa-cis-undecaprenyl phosphate + phosphate + H(+). Its function is as follows. Catalyzes the dephosphorylation of undecaprenyl diphosphate (UPP). Confers resistance to bacitracin. The sequence is that of Undecaprenyl-diphosphatase from Staphylococcus aureus (strain MSSA476).